An 840-amino-acid chain; its full sequence is MFPALETHLKQTIPDPYEDFMYRHLQYYGYFKAQRGSLPNSATHQHVRKNNPQYLLHGSLGGKDDLIPDTLQKEKLLWPTSLSSAVHRQIEAINRDSHMLSLPHLRSRQLLYDELDEVNPRLREPQELFSILSTKRPLLAPRWPIECEVIKESIHHIEWAPPQPEYFYQPKGNEKVPEIVGEKKGTVVYQLDSVPTEGSYFTSSRVGGKQGIIKELAVTLQGPEDNTLLFESRFECGNLQKAVRVDTYEYELTLRTDLYTNRHTQWFYFRVQNTRKDATYRFTIVNLLKPKSLYTVGMKPLLYSQMDANTRNIGWRREGNEIKYCKNNMDDGQQPFYCLTWTIQFPYDQDTCFFAHFYPYTYTDLQCYLLSVANNPIQSQFCKLQTLCRSLAGNTVYLLTITNPSQTPQEAAAKKAVVLSARVHPGESNGSWVMKGFLDFILSNSPDAQLLRDIFVFKVLPMLNPDGVIVGNYRCSLAGRDLNRHYKTILKESFPCIWYTRNMIKRLLEEREVLLYCDFHGHSRKNNTFLYGCNNNNRKYWLHERVFPLMLSKNAPDRFSFHSCNFKVQKCKEGTGRVVMWRMGILNSYTMESTFGGSTLGSKRDTHFTIEDLKSLGYHVCDTLLDFCDPDQTKFTQCLAELKELLRQEIHKKFHELGQDVDLEESWSDISLSDIESSTSGSDSSLSDGLPVHLANIADELTQKKMFKKKKKKSLQTRKQRNEQYQKKNLMWKLKLTEDTSEFASTLQKHPAFFKNSESSSFLPMRNENPRLNETNLNRRDKDTSLDPSMTTLILPKNKGRMQTNLNRRDKDTSLDPSMTTLILPKNKGRMQVLHLIYCI.

Positions 358 to 628 constitute a Peptidase M14 domain; it reads YPYTYTDLQC…HVCDTLLDFC (271 aa). Zn(2+) is bound by residues H424, E427, and H520. Catalysis depends on E592, which acts as the Proton donor/acceptor. A compositionally biased stretch (basic residues) spans 706–719; sequence MFKKKKKKSLQTRK. 2 disordered regions span residues 706-726 and 758-789; these read MFKKKKKKSLQTRKQRNEQYQ and ESSSFLPMRNENPRLNETNLNRRDKDTSLDPS.

This sequence belongs to the peptidase M14 family. In terms of assembly, interacts with RARRES1, KIF11 and MAPRE1. The cofactor is Zn(2+).

Its subcellular location is the cytoplasm. The protein localises to the cytosol. It localises to the cytoskeleton. It is found in the microtubule organizing center. The protein resides in the centrosome. Its subcellular location is the centriole. The protein localises to the cilium basal body. The catalysed reaction is (L-glutamyl)(n+1)-gamma-L-glutamyl-L-glutamyl-[protein] + H2O = (L-glutamyl)(n)-gamma-L-glutamyl-L-glutamyl-[protein] + L-glutamate. With respect to regulation, inhibited by RARRES1. In terms of biological role, metallocarboxypeptidase that mediates deglutamylation of tubulin and non-tubulin target proteins. Catalyzes the removal of polyglutamate side chains present on the gamma-carboxyl group of glutamate residues within the C-terminal tail of tubulin protein. Specifically cleaves tubulin long-side-chains, while it is not able to remove the branching point glutamate. Also catalyzes the removal of polyglutamate residues from the carboxy-terminus of non-tubulin proteins such as MYLK. The polypeptide is Cytosolic carboxypeptidase 2 (AGBL2) (Macaca fascicularis (Crab-eating macaque)).